The following is a 377-amino-acid chain: Succinyl-diaminopimelate desuccinylase (377 aa).

H66 is a binding site for Zn(2+). D68 is a catalytic residue. D99 is a binding site for Zn(2+). E133 serves as the catalytic Proton acceptor. Zn(2+) is bound by residues E134, E162, and H348.

Belongs to the peptidase M20A family. DapE subfamily. Homodimer. The cofactor is Zn(2+). It depends on Co(2+) as a cofactor.

The catalysed reaction is N-succinyl-(2S,6S)-2,6-diaminopimelate + H2O = (2S,6S)-2,6-diaminopimelate + succinate. It participates in amino-acid biosynthesis; L-lysine biosynthesis via DAP pathway; LL-2,6-diaminopimelate from (S)-tetrahydrodipicolinate (succinylase route): step 3/3. In terms of biological role, catalyzes the hydrolysis of N-succinyl-L,L-diaminopimelic acid (SDAP), forming succinate and LL-2,6-diaminopimelate (DAP), an intermediate involved in the bacterial biosynthesis of lysine and meso-diaminopimelic acid, an essential component of bacterial cell walls. This Histophilus somni (strain 2336) (Haemophilus somnus) protein is Succinyl-diaminopimelate desuccinylase.